A 338-amino-acid polypeptide reads, in one-letter code: Dodecaprenyl-phosphate galacturonate synthase (338 aa).

Helical transmembrane passes span 254–274 and 289–309; these read FFGS…LYLG and MLMV…TGIL.

The protein belongs to the glycosyltransferase 2 family.

It is found in the cell membrane. It catalyses the reaction di-trans,nona-cis-dodecaprenyl phosphate + UDP-alpha-D-galacturonate = beta-D-galacturonosyl di-trans,nona-cis-dodecaprenyl phosphate + UDP. Its function is as follows. Glycosyltransferase that catalyzes the synthesis of dodecaprenyl-phosphate galacturonate (Dod-P-GalA), likely from UDP-GalA and dodecaprenyl-phosphate. Dod-P-GalA is the lipid donor required for GalA transfer to lipopolysaccharide (LPS) specific residues catalyzed by the GalA transferases RgtA, RgtB, RgtC and RgtD. The sequence is that of Dodecaprenyl-phosphate galacturonate synthase from Rhizobium johnstonii (strain DSM 114642 / LMG 32736 / 3841) (Rhizobium leguminosarum bv. viciae).